Reading from the N-terminus, the 378-residue chain is Zinc finger protein DPF3 (378 aa).

A Glycyl lysine isopeptide (Lys-Gly) (interchain with G-Cter in SUMO2) cross-link involves residue Lys99. Residues 146–193 (LENDENVEEGNEEEDLEEDVPKRKNRTRGRARGSAGGRRRHDAASQED) are disordered. Over residues 148–163 (NDENVEEGNEEEDLEE) the composition is skewed to acidic residues. Positions 168 to 186 (RKNRTRGRARGSAGGRRRH) are enriched in basic residues. The segment at 198–221 (YVCDICGKRYKNRPGLSYHYAHTH) adopts a C2H2-type zinc-finger fold. Residues 225 to 254 (EEGDEAQDQETRSPPNHRNENHRPQKGPDG) form a disordered region. PHD-type zinc fingers lie at residues 259-319 (NNYC…CKSC) and 316-366 (CKSC…CWEL). The interaction with HDGFL2 stretch occupies residues 317–332 (KSCILCGTSENDDQLL). Residue Gly323 is modified to Phosphoserine.

Belongs to the requiem/DPF family. In terms of assembly, component of the BAF complex, which includes at least actin (ACTB), ARID1A, ARID1B/BAF250, SMARCA2, SMARCA4/BRG1/BAF190A, ACTL6A/BAF53, ACTL6B/BAF53B, SMARCE1/BAF57, SMARCC1/BAF155, SMARCC2/BAF170, SMARCB1/SNF5/INI1, and one or more of SMARCD1/BAF60A, SMARCD2/BAF60B, or SMARCD3/BAF60C. In muscle cells, the BAF complex also contains DPF3. Interacts with acetylated histones H3 and H4. Component of neuron-specific chromatin remodeling complex (nBAF complex) composed of at least, ARID1A/BAF250A or ARID1B/BAF250B, SMARCD1/BAF60A, SMARCD3/BAF60C, SMARCA2/BRM/BAF190B, SMARCA4/BRG1/BAF190A, SMARCB1/BAF47, SMARCC1/BAF155, SMARCE1/BAF57, SMARCC2/BAF170, DPF1/BAF45B, DPF3/BAF45C, ACTL6B/BAF53B and actin. As to quaternary structure, interacts with HDGFL2. Interacts with SMARCA4/BRG1/BAF190A, SMARCC1/BAF155 and SMARCD1/BAF60A. In terms of tissue distribution, expressed in the heart and somites. Expressed in cerebellum and spinal cord, but not in cerebral cortex. Expressed specifically in post-mitotic neurons (at protein level).

The protein resides in the nucleus. Its function is as follows. Muscle-specific component of the BAF complex, a multiprotein complex involved in transcriptional activation and repression of select genes by chromatin remodeling (alteration of DNA-nucleosome topology). Specifically binds acetylated lysines on histone 3 and 4 (H3K14ac, H3K9ac, H4K5ac, H4K8ac, H4K12ac, H4K16ac). In the complex, it acts as a tissue-specific anchor between histone acetylations and methylations and chromatin remodeling. It thereby probably plays an essential role in heart and skeletal muscle development. Belongs to the neuron-specific chromatin remodeling complex (nBAF complex). During neural development a switch from a stem/progenitor to a post-mitotic chromatin remodeling mechanism occurs as neurons exit the cell cycle and become committed to their adult state. The transition from proliferating neural stem/progenitor cells to post-mitotic neurons requires a switch in subunit composition of the npBAF and nBAF complexes. As neural progenitors exit mitosis and differentiate into neurons, npBAF complexes which contain ACTL6A/BAF53A and PHF10/BAF45A, are exchanged for homologous alternative ACTL6B/BAF53B and DPF1/BAF45B or DPF3/BAF45C subunits in neuron-specific complexes (nBAF). The npBAF complex is essential for the self-renewal/proliferative capacity of the multipotent neural stem cells. The nBAF complex along with CREST plays a role regulating the activity of genes essential for dendrite growth. Acts as a regulator of myogenesis in cooperation with HDGFL2. Mediates the interaction of HDGFL2 with the BAF complex. HDGFL2-DPF3a activate myogenic genes by increasing chromatin accessibility through recruitment of SMARCA4/BRG1/BAF190A (ATPase subunit of the BAF complex) to myogenic gene promoters. The chain is Zinc finger protein DPF3 (Dpf3) from Mus musculus (Mouse).